A 252-amino-acid polypeptide reads, in one-letter code: Trans-aconitate 2-methyltransferase (252 aa).

It belongs to the methyltransferase superfamily. Tam family.

The protein resides in the cytoplasm. The catalysed reaction is trans-aconitate + S-adenosyl-L-methionine = (E)-3-(methoxycarbonyl)pent-2-enedioate + S-adenosyl-L-homocysteine. Its function is as follows. Catalyzes the S-adenosylmethionine monomethyl esterification of trans-aconitate. The protein is Trans-aconitate 2-methyltransferase of Escherichia coli (strain 55989 / EAEC).